The sequence spans 1017 residues: Nonsense-mediated mRNA decay factor SMG5 (1017 aa).

Ser2 bears the N-acetylserine mark. A phosphoserine mark is found at Ser2 and Ser423. 2 disordered regions span residues 406–562 (GENP…PSEA) and 597–640 (TEPN…CRNE). Residues 448 to 467 (KSRKHSRLSCLRRRRRHHPP) are compositionally biased toward basic residues. Over residues 486 to 496 (DSAQASDGSDS) the composition is skewed to low complexity. Acidic residues predominate over residues 620–629 (ASEDGSESEG). A coiled-coil region spans residues 798 to 842 (AQSEQESLLQQAQAQFRMAEEEARRNRLMRDMAQLRLQLEVSQLE). The region spanning 873–996 (RQLATSGRFI…GPMQAALQAA (124 aa)) is the PINc domain.

As to quaternary structure, interacts with TERT, PPP2CA and SMG1. Part of a complex that contains SMG1, SMG5, SMG7, PPP2CA, a short isoform of UPF3A (isoform UPF3AS, but not isoform UPF3AL) and phosphorylated UPF1. Not detected in complexes that contain unphosphorylated UPF1.

Its subcellular location is the cytoplasm. The protein resides in the nucleus. Functionally, plays a role in nonsense-mediated mRNA decay. Does not have RNase activity by itself. Promotes dephosphorylation of UPF1. Together with SMG7 is thought to provide a link to the mRNA degradation machinery involving exonucleolytic pathways, and to serve as an adapter for UPF1 to protein phosphatase 2A (PP2A), thereby triggering UPF1 dephosphorylation. Necessary for TERT activity. The chain is Nonsense-mediated mRNA decay factor SMG5 from Mus musculus (Mouse).